Reading from the N-terminus, the 210-residue chain is Thymidylate kinase (210 aa).

11–18 (GLEGAGKS) contributes to the ATP binding site.

The protein belongs to the thymidylate kinase family.

The catalysed reaction is dTMP + ATP = dTDP + ADP. Its function is as follows. Phosphorylation of dTMP to form dTDP in both de novo and salvage pathways of dTTP synthesis. The chain is Thymidylate kinase from Histophilus somni (strain 2336) (Haemophilus somnus).